A 604-amino-acid chain; its full sequence is Dopamine receptor 3 (604 aa).

Topologically, residues 1–23 (MLTGQHHIPGIESPLMVVLWRVA) are extracellular. Residues 24–44 (AGVFLPLVPTMAVFGNVLVIL) form a helical membrane-spanning segment. Residues 45 to 58 (SVYRERNLQTVTNM) are Cytoplasmic-facing. Residues 59–79 (LIVSLAVSDLFVAIGVMSFGV) traverse the membrane as a helical segment. At 80 to 96 (YYEWNGFKWGLGSFFCH) the chain is on the extracellular side. An intrachain disulfide couples Cys-95 to Cys-170. A helical transmembrane segment spans residues 97–117 (VYQALDVACSTASILNLLAIS). The Cytoplasmic portion of the chain corresponds to 118–141 (LDRYIAIGHPISYAQYGARGGRAM). Residues 142–162 (ISITIVWGVSCAVALPLLLGV) traverse the membrane as a helical segment. The Extracellular segment spans residues 163–179 (NPMENDQCELANPWFNM). A helical membrane pass occupies residues 180-200 (ISSIFSFFIPCIAMIILYTII). Residues 201–520 (FRRLRQRERA…TKQMRREHKA (320 aa)) are Cytoplasmic-facing. A disordered region spans residues 399-430 (SIQDEKKMNSRPPENPFAHQNGTNKQRLLPNP). The helical transmembrane segment at 521–541 (TVTLAVVLAVFLFCWLPFFIL) threads the bilayer. The Extracellular portion of the chain corresponds to 542–559 (HLSNSICLVIDSNSDCIG). The helical transmembrane segment at 560 to 580 (FLPLYLATWLGYLNSSLNPLI) threads the bilayer. The Cytoplasmic portion of the chain corresponds to 581–604 (YTVFDQRFRNAFRNILSCGFFKKR).

It belongs to the G-protein coupled receptor 1 family.

Its subcellular location is the cell membrane. Functionally, receptor for dopamine. The activity of this receptor is mediated by G proteins which activate adenylyl cyclase. In terms of antagonist responses, would be classed with the D2-like dopamine receptor group. Mediates the effect of dopamine on the inhibition of locomotion. Acts as an antagonist of dop-1. The chain is Dopamine receptor 3 from Caenorhabditis briggsae.